A 1333-amino-acid polypeptide reads, in one-letter code: Protein CLASP-1 (1333 aa).

The HEAT 1 repeat unit spans residues 168-206 (LIPQLCRLTNDPNSEVRDASTNCLVDLMVFGGKSIIAKI). The span at 269 to 305 (STTSFTSSARLSTPPRTNAPSLSPSPSTPSPLSLPAA) shows a compositional bias: low complexity. The interval 269–311 (STTSFTSSARLSTPPRTNAPSLSPSPSTPSPLSLPAANGRSRD) is disordered. A coiled-coil region spans residues 360–389 (SNSDVREKLETANSVLRNANEDWSKRANQL). Disordered regions lie at residues 579-711 (QKML…HQTP) and 764-792 (TPPK…NSSN). Residues 601–611 (NQKQPQQPQQN) show a composition bias toward low complexity. Residues 612–644 (ISQKFLSQRSASALDNKSQVLSIAKPQQSNPSR) are compositionally biased toward polar residues. Composition is skewed to low complexity over residues 657–669 (SSTS…VRSS) and 686–707 (TNFN…STST). The HEAT 2 repeat unit spans residues 1266–1304 (VAPCFVSAYDSTSSSVRKCAVFGLVALVQRVGMPRLETH).

It belongs to the CLASP family.

The protein resides in the cytoplasm. It localises to the cytoskeleton. In terms of biological role, microtubule plus-end tracking protein that promotes the stabilization of dynamic microtubules. This Caenorhabditis briggsae protein is Protein CLASP-1.